The chain runs to 71 residues: Protein CYSTEINE-RICH TRANSMEMBRANE MODULE 3 (71 aa).

A disordered region spans residues 30 to 49 (VMMKDSPQTVQPPHEGQSKG). A helical membrane pass occupies residues 48 to 64 (KGSGGFLRGCLAAMCCC).

This sequence belongs to the CYSTM1 family. As to quaternary structure, heterodimers. Interacts with CYSTM7 and WIH1/CYSTM13. As to expression, mostly expressed in leaves and flowers and, to a lower extent, in stems, siliques, shoots and roots.

The protein localises to the cell membrane. It is found in the cytoplasm. The protein resides in the mitochondrion. In terms of biological role, negatively regulates salt stress responses and Na(+) homeostasis. Prevents Na(+) efflux, disturbs reactive oxygen species (ROS) homeostasis, and represses the expression of nuclear salt stress-responsive genes. Involved in resistance to abiotic stress. The protein is Protein CYSTEINE-RICH TRANSMEMBRANE MODULE 3 of Arabidopsis thaliana (Mouse-ear cress).